The following is a 253-amino-acid chain: Phosphate import ATP-binding protein PstB (253 aa).

An ABC transporter domain is found at 5–248 (IQVRDLNAYY…PSDKRTEDYI (244 aa)). 37-44 (GPSGCGKS) contributes to the ATP binding site.

Belongs to the ABC transporter superfamily. Phosphate importer (TC 3.A.1.7) family. As to quaternary structure, the complex is composed of two ATP-binding proteins (PstB), two transmembrane proteins (PstC and PstA) and a solute-binding protein (PstS).

Its subcellular location is the cell inner membrane. The enzyme catalyses phosphate(out) + ATP + H2O = ADP + 2 phosphate(in) + H(+). Its function is as follows. Part of the ABC transporter complex PstSACB involved in phosphate import. Responsible for energy coupling to the transport system. The protein is Phosphate import ATP-binding protein PstB of Koribacter versatilis (strain Ellin345).